Here is a 353-residue protein sequence, read N- to C-terminus: 3-dehydroquinate synthase (353 aa).

Belongs to the archaeal-type DHQ synthase family.

The catalysed reaction is 2-amino-2,3,7-trideoxy-D-lyxo-hept-6-ulosonate + NAD(+) + H2O = 3-dehydroquinate + NH4(+) + NADH + H(+). Functionally, catalyzes the oxidative deamination and cyclization of 2-amino-3,7-dideoxy-D-threo-hept-6-ulosonic acid (ADH) to yield 3-dehydroquinate (DHQ), which is fed into the canonical shikimic pathway of aromatic amino acid biosynthesis. This chain is 3-dehydroquinate synthase, found in Nitrosopumilus maritimus (strain SCM1).